Consider the following 111-residue polypeptide: MFGKAGLGGLMKQAQQMQENMKKAQAKLAETEIEGEAGNGLVKITMTCAHEVRKIDISPDLIQEAADDKEMLEDLILAALKSARGKAEETANKTMGAFTQGLPPGVGDFFR.

It belongs to the YbaB/EbfC family. In terms of assembly, homodimer.

The protein resides in the cytoplasm. The protein localises to the nucleoid. Functionally, binds to DNA and alters its conformation. May be involved in regulation of gene expression, nucleoid organization and DNA protection. The chain is Nucleoid-associated protein NMC1380 from Neisseria meningitidis serogroup C / serotype 2a (strain ATCC 700532 / DSM 15464 / FAM18).